The chain runs to 225 residues: 2-amino-5-formylamino-6-ribosylaminopyrimidin-4(3H)-one 5'-monophosphate deformylase (225 aa).

Residues E28, H30, D39, and H107 each contribute to the Fe cation site.

Belongs to the creatininase superfamily. FAPy deformylase family. As to quaternary structure, homodimer. Fe(2+) serves as cofactor. The cofactor is Zn(2+).

It catalyses the reaction 2-amino-5-formylamino-6-(5-phospho-D-ribosylamino)pyrimidin-4(3H)-one + H2O = 2,5-diamino-6-(1-D-ribosylamino)pyrimidin-4(3H)-one 5'-phosphate + formate + H(+). Its pathway is cofactor biosynthesis; coenzyme F420 biosynthesis. The protein operates within cofactor biosynthesis; riboflavin biosynthesis. Its function is as follows. Catalyzes the hydrolysis of the formamide of 2-amino-5-formylamino-6-ribosylamino-4(3H)-pyrimidinone 5'-monophosphate (FAPy) to form 2,5-diamino-6-ribosylamino-4(3H)-pyrimidinone 5'-phosphate (APy). The chain is 2-amino-5-formylamino-6-ribosylaminopyrimidin-4(3H)-one 5'-monophosphate deformylase from Methanocaldococcus sp. (strain FS406-22).